The primary structure comprises 651 residues: Chaperone protein dnaK1 (651 aa).

At T197 the chain carries Phosphothreonine; by autocatalysis.

It belongs to the heat shock protein 70 family.

Its function is as follows. Acts as a chaperone. This is Chaperone protein dnaK1 (dnaK1) from Thermosynechococcus vestitus (strain NIES-2133 / IAM M-273 / BP-1).